Here is a 322-residue protein sequence, read N- to C-terminus: Malate dehydrogenase (322 aa).

NAD(+)-binding positions include 10–15 (GSGMIG) and aspartate 34. Positions 83 and 89 each coordinate substrate. NAD(+) contacts are provided by residues asparagine 96 and 119-121 (ITN). Substrate-binding residues include asparagine 121 and arginine 152. Catalysis depends on histidine 176, which acts as the Proton acceptor.

The protein belongs to the LDH/MDH superfamily. MDH type 3 family.

The enzyme catalyses (S)-malate + NAD(+) = oxaloacetate + NADH + H(+). Functionally, catalyzes the reversible oxidation of malate to oxaloacetate. This Mesorhizobium japonicum (strain LMG 29417 / CECT 9101 / MAFF 303099) (Mesorhizobium loti (strain MAFF 303099)) protein is Malate dehydrogenase.